Consider the following 357-residue polypeptide: Histidinol-phosphate aminotransferase 2 (357 aa).

Residue lysine 215 is modified to N6-(pyridoxal phosphate)lysine.

This sequence belongs to the class-II pyridoxal-phosphate-dependent aminotransferase family. Histidinol-phosphate aminotransferase subfamily. As to quaternary structure, homodimer. It depends on pyridoxal 5'-phosphate as a cofactor.

The catalysed reaction is L-histidinol phosphate + 2-oxoglutarate = 3-(imidazol-4-yl)-2-oxopropyl phosphate + L-glutamate. The protein operates within amino-acid biosynthesis; L-histidine biosynthesis; L-histidine from 5-phospho-alpha-D-ribose 1-diphosphate: step 7/9. The protein is Histidinol-phosphate aminotransferase 2 of Thiobacillus denitrificans (strain ATCC 25259 / T1).